We begin with the raw amino-acid sequence, 541 residues long: Chaperonin GroEL 1 (541 aa).

Residues 30–33 (TLGP), 87–91 (DGTTT), Gly-414, 478–480 (NAA), and Asp-494 contribute to the ATP site.

Belongs to the chaperonin (HSP60) family. In terms of assembly, forms a cylinder of 14 subunits composed of two heptameric rings stacked back-to-back. Interacts with the co-chaperonin GroES.

The protein localises to the cytoplasm. It catalyses the reaction ATP + H2O + a folded polypeptide = ADP + phosphate + an unfolded polypeptide.. Functionally, together with its co-chaperonin GroES, plays an essential role in assisting protein folding. The GroEL-GroES system forms a nano-cage that allows encapsulation of the non-native substrate proteins and provides a physical environment optimized to promote and accelerate protein folding. The sequence is that of Chaperonin GroEL 1 from Thermobifida fusca (strain YX).